We begin with the raw amino-acid sequence, 299 residues long: Acetyl-coenzyme A carboxylase carboxyl transferase subunit beta (299 aa).

Residues 25–294 (VWTKCTSCEQ…PFVEPELIQE (270 aa)) form the CoA carboxyltransferase N-terminal domain. Zn(2+) is bound by residues Cys29, Cys32, Cys48, and Cys51. Residues 29 to 51 (CTSCEQVLYRDELKRHLEVCPKC) form a C4-type zinc finger.

This sequence belongs to the AccD/PCCB family. Acetyl-CoA carboxylase is a heterohexamer composed of biotin carboxyl carrier protein (AccB), biotin carboxylase (AccC) and two subunits each of ACCase subunit alpha (AccA) and ACCase subunit beta (AccD). It depends on Zn(2+) as a cofactor.

It is found in the cytoplasm. The enzyme catalyses N(6)-carboxybiotinyl-L-lysyl-[protein] + acetyl-CoA = N(6)-biotinyl-L-lysyl-[protein] + malonyl-CoA. Its pathway is lipid metabolism; malonyl-CoA biosynthesis; malonyl-CoA from acetyl-CoA: step 1/1. In terms of biological role, component of the acetyl coenzyme A carboxylase (ACC) complex. Biotin carboxylase (BC) catalyzes the carboxylation of biotin on its carrier protein (BCCP) and then the CO(2) group is transferred by the transcarboxylase to acetyl-CoA to form malonyl-CoA. The polypeptide is Acetyl-coenzyme A carboxylase carboxyl transferase subunit beta (Histophilus somni (strain 129Pt) (Haemophilus somnus)).